A 1286-amino-acid polypeptide reads, in one-letter code: CLIP-associating protein 2 (1286 aa).

Residues Met-1–Thr-40 form a golgi localization region. 2 positions are modified to phosphoserine: Ser-14 and Ser-20. A disordered region spans residues Asp-17 to Gly-67. Positions Ser-53–Gly-67 are enriched in gly residues. The tract at residues Gly-66–Ser-317 is TOG 1. 3 HEAT repeats span residues His-179–Thr-214, His-215–Thr-251, and Arg-256–Gly-293. Residues Val-320 to Ser-374 are disordered. Residues Ser-322, Ser-333, and Ser-336 each carry the phosphoserine modification. Positions Ser-322–Pro-340 are enriched in low complexity. Over residues Phe-341–Thr-352 the composition is skewed to polar residues. Phosphoserine occurs at positions 374, 376, and 413. The interval Tyr-411–Val-473 is disordered. Residues Thr-417–Val-431 are compositionally biased toward basic and acidic residues. The tract at residues Arg-450–Ser-565 is interaction with microtubules, MAPRE1 and MAPRE3. Low complexity predominate over residues Ser-459–Val-473. Phosphoserine is present on residues Ser-461, Ser-465, Ser-469, Ser-484, and Ser-495. The segment at Ser-493–Ser-564 is disordered. An SXIP motif 1; mediates interaction with MAPRE1 and targeting to microtubule plus ends motif is present at residues Ser-500–Pro-503. Ser-513 carries the phosphoserine modification. Residues Ser-523–Pro-526 carry the SXIP motif 2; mediates interaction with MAPRE1 and targeting to microtubule plus ends motif. Residues Ser-531, Ser-535, Ser-570, Ser-572, Ser-581, Ser-614, and Ser-620 each carry the phosphoserine modification. Over residues Arg-605–Asp-616 the composition is skewed to basic and acidic residues. Positions Arg-605–Ile-638 are disordered. The segment covering Ser-620 to Arg-634 has biased composition (low complexity). The segment at Met-642–Asn-873 is TOG 2. HEAT repeat units lie at residues Lys-702–Ala-739 and Leu-764–Pro-801. At Thr-779 the chain carries Phosphothreonine. An interaction with RSN and localization to the Golgi and kinetochores region spans residues Thr-864–Ser-1286. 2 disordered regions span residues His-870 to Asp-920 and Ser-944 to Ala-989. 2 stretches are compositionally biased toward polar residues: residues Arg-872–Ser-884 and Ser-893–Pro-914. A Phosphoserine modification is found at Ser-884. Phosphoserine occurs at positions 944, 947, 1005, and 1021. Over residues Ser-947 to Gly-964 the composition is skewed to basic and acidic residues. A required for cortical localization region spans residues Arg-1009–Ser-1286. HEAT repeat units follow at residues Leu-1046–Glu-1083, Glu-1090–Ala-1127, and Met-1208–Asp-1245.

Belongs to the CLASP family. As to quaternary structure, interacts with microtubules. Interacts with MAPRE1; probably required for targeting to growing microtubule plus ends. Interacts with ERC1, MAPRE3 and PHLDB2. The interaction with ERC1 may be mediated by PHLDB2. Interacts with GCC2; recruits CLASP2 to Golgi membranes. Interacts with CLIP2 and RSN. Interacts with MACF1. Interacts with mtcl2. Interacts with MTCL1. Phosphorylated by GSK3B. Phosphorylation by GSK3B may negatively regulate binding to microtubule lattices in lamella. Isoform 2 is phosphorylated on Ser-241. As to expression, highly expressed in brain and at low levels in heart, kidney and lung.

The protein resides in the cytoplasm. Its subcellular location is the cytoskeleton. It localises to the microtubule organizing center. The protein localises to the centrosome. It is found in the chromosome. The protein resides in the centromere. Its subcellular location is the kinetochore. It localises to the spindle. The protein localises to the spindle pole. It is found in the golgi apparatus. The protein resides in the trans-Golgi network. Its subcellular location is the cell membrane. It localises to the cell projection. The protein localises to the ruffle membrane. It is found in the cell cortex. In terms of biological role, microtubule plus-end tracking protein that promotes the stabilization of dynamic microtubules. Involved in the nucleation of noncentrosomal microtubules originating from the trans-Golgi network (TGN). Required for the polarization of the cytoplasmic microtubule arrays in migrating cells towards the leading edge of the cell. May act at the cell cortex to enhance the frequency of rescue of depolymerizing microtubules by attaching their plus-ends to cortical platforms composed of ERC1 and PHLDB2. This cortical microtubule stabilizing activity is regulated at least in part by phosphatidylinositol 3-kinase signaling. Also performs a similar stabilizing function at the kinetochore which is essential for the bipolar alignment of chromosomes on the mitotic spindle. Acts as a mediator of ERBB2-dependent stabilization of microtubules at the cell cortex. The sequence is that of CLIP-associating protein 2 (Clasp2) from Mus musculus (Mouse).